Here is a 183-residue protein sequence, read N- to C-terminus: Inner membrane-spanning protein YciB (183 aa).

Helical transmembrane passes span 22–44 (VQAA…RILF), 53–73 (IVGL…DLAF), 76–96 (WKVT…QYVF), 121–141 (LGWA…SQLF), and 153–173 (GFTG…YPYI).

It belongs to the YciB family.

Its subcellular location is the cell inner membrane. Functionally, plays a role in cell envelope biogenesis, maintenance of cell envelope integrity and membrane homeostasis. This chain is Inner membrane-spanning protein YciB, found in Haemophilus ducreyi (strain 35000HP / ATCC 700724).